The sequence spans 34 residues: Protein MgtT (34 aa).

Residues 1 to 34 are disordered; it reads MNGDNPSPNRPLVTVVYKGPDFYDGEKKPPVNRR. Basic and acidic residues predominate over residues 24 to 34; that stretch reads DGEKKPPVNRR.

This is Protein MgtT from Escherichia coli (strain K12).